The sequence spans 64 residues: Large ribosomal subunit protein bL35 (64 aa).

The segment at 1–29 (MPKMKTHSGAKKRFKLTGSGKLRRQQANR) is disordered.

The protein belongs to the bacterial ribosomal protein bL35 family.

The polypeptide is Large ribosomal subunit protein bL35 (Pseudarthrobacter chlorophenolicus (strain ATCC 700700 / DSM 12829 / CIP 107037 / JCM 12360 / KCTC 9906 / NCIMB 13794 / A6) (Arthrobacter chlorophenolicus)).